A 304-amino-acid polypeptide reads, in one-letter code: Non-specific ribonucleoside hydrolase RihC (304 aa).

The active site involves histidine 233.

The protein belongs to the IUNH family. RihC subfamily.

In terms of biological role, hydrolyzes both purine and pyrimidine ribonucleosides with a broad-substrate specificity. The chain is Non-specific ribonucleoside hydrolase RihC from Escherichia coli O8 (strain IAI1).